The primary structure comprises 352 residues: Uroporphyrinogen decarboxylase (352 aa).

Substrate-binding positions include Arg26–Arg30, Asp76, Tyr153, Ser208, and His323.

It belongs to the uroporphyrinogen decarboxylase family. As to quaternary structure, homodimer.

It is found in the cytoplasm. The catalysed reaction is uroporphyrinogen III + 4 H(+) = coproporphyrinogen III + 4 CO2. The protein operates within porphyrin-containing compound metabolism; protoporphyrin-IX biosynthesis; coproporphyrinogen-III from 5-aminolevulinate: step 4/4. Its function is as follows. Catalyzes the decarboxylation of four acetate groups of uroporphyrinogen-III to yield coproporphyrinogen-III. This Prochlorococcus marinus (strain NATL1A) protein is Uroporphyrinogen decarboxylase.